Here is a 96-residue protein sequence, read N- to C-terminus: Phosphoribosyl-ATP pyrophosphatase (96 aa).

This sequence belongs to the PRA-PH family.

The protein resides in the cytoplasm. It catalyses the reaction 1-(5-phospho-beta-D-ribosyl)-ATP + H2O = 1-(5-phospho-beta-D-ribosyl)-5'-AMP + diphosphate + H(+). Its pathway is amino-acid biosynthesis; L-histidine biosynthesis; L-histidine from 5-phospho-alpha-D-ribose 1-diphosphate: step 2/9. The chain is Phosphoribosyl-ATP pyrophosphatase from Methanococcus aeolicus (strain ATCC BAA-1280 / DSM 17508 / OCM 812 / Nankai-3).